A 474-amino-acid chain; its full sequence is Cyclin-dependent kinase 18 (474 aa).

Ser14, Ser74, Ser89, Ser98, Ser117, and Ser132 each carry phosphoserine. Residues 44-87 (DLQLGPLGRDPLQECSTFSPTDSGEEPGQLSPGVQFQRRQNQRR) are disordered. Residues 144 to 425 (YVKLDKLGEG…AEAALSHPYF (282 aa)) enclose the Protein kinase domain. ATP-binding positions include 150-158 (LGEGTYATV) and Lys173. Asp265 (proton acceptor) is an active-site residue. Phosphoserine is present on residues Ser440 and Ser443.

This sequence belongs to the protein kinase superfamily. CMGC Ser/Thr protein kinase family. CDC2/CDKX subfamily.

The enzyme catalyses L-seryl-[protein] + ATP = O-phospho-L-seryl-[protein] + ADP + H(+). The catalysed reaction is L-threonyl-[protein] + ATP = O-phospho-L-threonyl-[protein] + ADP + H(+). May play a role in signal transduction cascades in terminally differentiated cells. The protein is Cyclin-dependent kinase 18 (CDK18) of Pongo abelii (Sumatran orangutan).